Consider the following 317-residue polypeptide: Probable porphobilinogen deaminase (317 aa).

Cys-234 bears the S-(dipyrrolylmethanemethyl)cysteine mark.

It belongs to the HMBS family. Requires dipyrromethane as cofactor.

It catalyses the reaction 4 porphobilinogen + H2O = hydroxymethylbilane + 4 NH4(+). The protein operates within porphyrin-containing compound metabolism; protoporphyrin-IX biosynthesis; coproporphyrinogen-III from 5-aminolevulinate: step 2/4. Functionally, tetrapolymerization of the monopyrrole PBG into the hydroxymethylbilane pre-uroporphyrinogen in several discrete steps. In Methanosarcina acetivorans (strain ATCC 35395 / DSM 2834 / JCM 12185 / C2A), this protein is Probable porphobilinogen deaminase.